Consider the following 321-residue polypeptide: Beta-lactamase (321 aa).

Residues 1 to 30 (MEKNRKKQIVVLSIALVCIFILVFSLFHKS) form the signal peptide. The active-site Acyl-ester intermediate is Ser-83. 233–235 (KTG) provides a ligand contact to substrate.

Belongs to the class-A beta-lactamase family.

It carries out the reaction a beta-lactam + H2O = a substituted beta-amino acid. Its activity is regulated as follows. Inhibited by clavulanic acid. Functionally, can hydrolyze cephalosporins, penicillins and also cefoxitin; but at a slow rate. The protein is Beta-lactamase (cfxA) of Phocaeicola vulgatus (Bacteroides vulgatus).